Consider the following 153-residue polypeptide: Putative pre-16S rRNA nuclease (153 aa).

The protein belongs to the YqgF nuclease family.

The protein resides in the cytoplasm. Its function is as follows. Could be a nuclease involved in processing of the 5'-end of pre-16S rRNA. In Prochlorococcus marinus (strain MIT 9301), this protein is Putative pre-16S rRNA nuclease.